Reading from the N-terminus, the 296-residue chain is tRNA dimethylallyltransferase (296 aa).

Residue 2–9 coordinates ATP; the sequence is GPTASGKT. 4-9 provides a ligand contact to substrate; sequence TASGKT. 3 interaction with substrate tRNA regions span residues 27–30, 151–155, and 232–237; these read DSAL, QRLSR, and RCVGYR.

Belongs to the IPP transferase family. Monomer. Requires Mg(2+) as cofactor.

It catalyses the reaction adenosine(37) in tRNA + dimethylallyl diphosphate = N(6)-dimethylallyladenosine(37) in tRNA + diphosphate. Its function is as follows. Catalyzes the transfer of a dimethylallyl group onto the adenine at position 37 in tRNAs that read codons beginning with uridine, leading to the formation of N6-(dimethylallyl)adenosine (i(6)A). This chain is tRNA dimethylallyltransferase, found in Shewanella woodyi (strain ATCC 51908 / MS32).